Reading from the N-terminus, the 245-residue chain is Putative outer membrane protein RBE_0022 (245 aa).

The signal sequence occupies residues 1–23 (MIRMSKRLGVILFVSCISINSFA).

The protein belongs to the OmpW/AlkL family.

The protein localises to the cell outer membrane. This chain is Putative outer membrane protein RBE_0022, found in Rickettsia bellii (strain RML369-C).